The following is a 424-amino-acid chain: Putative glutamate--cysteine ligase 2-3 (424 aa).

2 disordered regions span residues methionine 1–valine 20 and glycine 405–proline 424.

This sequence belongs to the glutamate--cysteine ligase type 2 family. YbdK subfamily.

It catalyses the reaction L-cysteine + L-glutamate + ATP = gamma-L-glutamyl-L-cysteine + ADP + phosphate + H(+). Functionally, ATP-dependent carboxylate-amine ligase which exhibits weak glutamate--cysteine ligase activity. This is Putative glutamate--cysteine ligase 2-3 from Paenarthrobacter aurescens (strain TC1).